The primary structure comprises 116 residues: Dynein light chain Tctex-type 3 (116 aa).

Tyrosine 4 is modified (3'-nitrotyrosine).

It belongs to the dynein light chain Tctex-type family. Homodimer. The cytoplasmic dynein 1 complex consists of two catalytic heavy chains (HCs) and a number of non-catalytic subunits presented by intermediate chains (ICs), light intermediate chains (LICs) and light chains (LCs); the composition seems to vary in respect to the IC, LIC and LC composition. The heavy chain homodimer serves as a scaffold for the probable homodimeric assembly of the respective non-catalytic subunits. The ICs and LICs bind directly to the HC dimer and the LCs assemble on the IC dimer. DYNLT1 and DYNLT3 compete for association with dynein IC (DYNC1I1 or DYNC1I2). Self-associates. Interacts with DYNC1I1 and DYNC1I2. Interacts with BUB3. Interacts with SATB1 in nucleus to form complex with matrix attachment regions (MARs) of DNA.

It localises to the nucleus. It is found in the cytoplasm. Its subcellular location is the cytoskeleton. The protein resides in the chromosome. The protein localises to the centromere. It localises to the kinetochore. Functionally, acts as one of several non-catalytic accessory components of the cytoplasmic dynein 1 complex that are thought to be involved in linking dynein to cargos and to adapter proteins that regulate dynein function. Cytoplasmic dynein 1 acts as a motor for the intracellular retrograde motility of vesicles and organelles along microtubules. Probably binds BUB3 as part of transport cargo. Required for the efficient progression through mitosis. The protein is Dynein light chain Tctex-type 3 (Dynlt3) of Mus musculus (Mouse).